The sequence spans 248 residues: Probable transcriptional regulatory protein RPD_4171 (248 aa).

Residues 1–22 (MAGHSQFKNIMHRKGKQDAQRS) form a disordered region.

The protein belongs to the TACO1 family.

It localises to the cytoplasm. This chain is Probable transcriptional regulatory protein RPD_4171, found in Rhodopseudomonas palustris (strain BisB5).